Here is a 540-residue protein sequence, read N- to C-terminus: 2,3-bisphosphoglycerate-independent phosphoglycerate mutase (540 aa).

D24 and S74 together coordinate Mn(2+). S74 (phosphoserine intermediate) is an active-site residue. Substrate is bound by residues H135, 165 to 166 (RD), R197, R203, 268 to 271 (RPDR), and K341. Residues D408, H412, D449, H450, and H467 each contribute to the Mn(2+) site.

The protein belongs to the BPG-independent phosphoglycerate mutase family. Monomer. Mn(2+) is required as a cofactor.

The catalysed reaction is (2R)-2-phosphoglycerate = (2R)-3-phosphoglycerate. It functions in the pathway carbohydrate degradation; glycolysis; pyruvate from D-glyceraldehyde 3-phosphate: step 3/5. In terms of biological role, catalyzes the interconversion of 2-phosphoglycerate and 3-phosphoglycerate. The polypeptide is 2,3-bisphosphoglycerate-independent phosphoglycerate mutase (Prochlorococcus marinus (strain MIT 9313)).